The following is a 349-amino-acid chain: Aspartate-semialdehyde dehydrogenase (349 aa).

Residues 12–15 (TGSV) and 39–40 (NS) contribute to the NADP(+) site. A phosphate-binding site is contributed by Arg113. The active-site Acyl-thioester intermediate is Cys148. Gln175 contacts substrate. 178-179 (SG) is an NADP(+) binding site. Glu201 is a binding site for substrate. Position 204 (Lys204) interacts with phosphate. Arg234 contacts substrate. His241 (proton acceptor) is an active-site residue. 326-327 (NT) contributes to the NADP(+) binding site.

It belongs to the aspartate-semialdehyde dehydrogenase family. As to quaternary structure, homodimer.

It carries out the reaction L-aspartate 4-semialdehyde + phosphate + NADP(+) = 4-phospho-L-aspartate + NADPH + H(+). The protein operates within amino-acid biosynthesis; L-lysine biosynthesis via DAP pathway; (S)-tetrahydrodipicolinate from L-aspartate: step 2/4. It participates in amino-acid biosynthesis; L-methionine biosynthesis via de novo pathway; L-homoserine from L-aspartate: step 2/3. It functions in the pathway amino-acid biosynthesis; L-threonine biosynthesis; L-threonine from L-aspartate: step 2/5. Catalyzes the NADPH-dependent formation of L-aspartate-semialdehyde (L-ASA) by the reductive dephosphorylation of L-aspartyl-4-phosphate. The sequence is that of Aspartate-semialdehyde dehydrogenase from Leptospira interrogans serogroup Icterohaemorrhagiae serovar copenhageni (strain Fiocruz L1-130).